Consider the following 188-residue polypeptide: Der GTPase-activating protein YihI (188 aa).

Disordered regions lie at residues methionine 1 to proline 80 and aspartate 162 to phenylalanine 188. A compositionally biased stretch (basic and acidic residues) spans threonine 27–aspartate 37. The segment covering asparagine 47–glycine 57 has biased composition (polar residues).

It belongs to the YihI family. As to quaternary structure, interacts with Der.

In terms of biological role, a GTPase-activating protein (GAP) that modifies Der/EngA GTPase function. May play a role in ribosome biogenesis. This Yersinia pseudotuberculosis serotype O:3 (strain YPIII) protein is Der GTPase-activating protein YihI.